The sequence spans 305 residues: Ribonuclease BN (305 aa).

The Zn(2+) site is built by H64, H66, D68, H69, H141, D212, and H270. The Proton acceptor role is filled by D68.

The protein belongs to the RNase Z family. RNase BN subfamily. In terms of assembly, homodimer. Zn(2+) is required as a cofactor.

Zinc phosphodiesterase, which has both exoribonuclease and endoribonuclease activities. The protein is Ribonuclease BN of Salmonella agona (strain SL483).